The primary structure comprises 237 residues: Regulator of G-protein signaling 9-binding protein (237 aa).

Residues 1 to 212 (MAREECKALL…ERAGPCDPSK (212 aa)) are Cytoplasmic-facing. The stretch at 30 to 54 (SADTQDLREELQKTRQKARELAVAT) forms a coiled coil. An SNARE-like region spans residues 153–202 (EVLQVGEMIDDMEMKVNVPRWTVQARQAAGAELLSGASAGASSAGGISVE). The chain crosses the membrane as a helical; Anchor for type IV membrane protein span at residues 213-233 (ALAATVFSAVLLVAVALALCV). At 234–237 (AKLS) the chain is on the extracellular side.

This sequence belongs to the RGS7BP/RGS9BP family. As to quaternary structure, specifically interacts with isoform RGS9-1 of RGS9. Interaction is decreased when RGS9-1 is phosphorylated at 'Ser-475'. Component of the RGS9-1-Gbeta5 complex composed of RGS9-1, Gbeta5 (GNB5) and RGS9BP. As to expression, predominantly expressed in photoreceptors of the retina. Weakly expressed in other areas of the central nervous system.

It is found in the membrane. In terms of biological role, regulator of G protein-coupled receptor (GPCR) signaling in phototransduction. Participates in the recovery phase of visual transduction via its interaction with RGS9-1 isoform. Acts as a membrane-anchor that mediates the targeting of RGS9-1 to the photoreceptor outer segment, where phototransduction takes place. Enhances the ability of RGS9-1 to stimulate G protein GTPase activity, allowing the visual signal to be terminated on the physiologically time scale. It also controls the proteolytic stability of RGS9-1, probably by protecting it from degradation. This chain is Regulator of G-protein signaling 9-binding protein (Rgs9bp), found in Mus musculus (Mouse).